Consider the following 127-residue polypeptide: Holo-[acyl-carrier-protein] synthase (127 aa).

Residues D8 and E57 each coordinate Mg(2+).

The protein belongs to the P-Pant transferase superfamily. AcpS family. Mg(2+) serves as cofactor.

Its subcellular location is the cytoplasm. The catalysed reaction is apo-[ACP] + CoA = holo-[ACP] + adenosine 3',5'-bisphosphate + H(+). Its function is as follows. Transfers the 4'-phosphopantetheine moiety from coenzyme A to a Ser of acyl-carrier-protein. The protein is Holo-[acyl-carrier-protein] synthase of Vesicomyosocius okutanii subsp. Calyptogena okutanii (strain HA).